The chain runs to 288 residues: Polyamine aminopropyltransferase (288 aa).

The PABS domain maps to 9–238 (ETLHDQFGQY…GIMTFAWATD (230 aa)). Gln-33 contacts S-methyl-5'-thioadenosine. His-64 and Asp-88 together coordinate spermidine. Residues Glu-108 and 140 to 141 (DG) each bind S-methyl-5'-thioadenosine. Asp-158 functions as the Proton acceptor in the catalytic mechanism. Position 158–161 (158–161 (DCTD)) interacts with spermidine. Position 165 (Pro-165) interacts with S-methyl-5'-thioadenosine.

The protein belongs to the spermidine/spermine synthase family. Homodimer or homotetramer.

The protein localises to the cytoplasm. The catalysed reaction is S-adenosyl 3-(methylsulfanyl)propylamine + putrescine = S-methyl-5'-thioadenosine + spermidine + H(+). It participates in amine and polyamine biosynthesis; spermidine biosynthesis; spermidine from putrescine: step 1/1. In terms of biological role, catalyzes the irreversible transfer of a propylamine group from the amino donor S-adenosylmethioninamine (decarboxy-AdoMet) to putrescine (1,4-diaminobutane) to yield spermidine. The polypeptide is Polyamine aminopropyltransferase (Escherichia fergusonii (strain ATCC 35469 / DSM 13698 / CCUG 18766 / IAM 14443 / JCM 21226 / LMG 7866 / NBRC 102419 / NCTC 12128 / CDC 0568-73)).